A 227-amino-acid chain; its full sequence is Lipoprotein-releasing system ATP-binding protein LolD (227 aa).

The region spanning 6 to 227 (LTSQKLYKSY…LHEGSLYARE (222 aa)) is the ABC transporter domain. Residue 42–49 (GPSGSGKS) participates in ATP binding.

The protein belongs to the ABC transporter superfamily. Lipoprotein translocase (TC 3.A.1.125) family. As to quaternary structure, the complex is composed of two ATP-binding proteins (LolD) and two transmembrane proteins (LolC and LolE).

It is found in the cell inner membrane. In terms of biological role, part of the ABC transporter complex LolCDE involved in the translocation of mature outer membrane-directed lipoproteins, from the inner membrane to the periplasmic chaperone, LolA. Responsible for the formation of the LolA-lipoprotein complex in an ATP-dependent manner. This Legionella pneumophila (strain Lens) protein is Lipoprotein-releasing system ATP-binding protein LolD.